The primary structure comprises 93 residues: Protein ea8.5 (93 aa).

This chain is Protein ea8.5 (ea8.5), found in Escherichia phage lambda (Bacteriophage lambda).